Reading from the N-terminus, the 702-residue chain is Ribosomal RNA large subunit methyltransferase K/L (702 aa).

The THUMP domain maps to leucine 43 to leucine 154.

It belongs to the methyltransferase superfamily. RlmKL family.

It localises to the cytoplasm. It catalyses the reaction guanosine(2445) in 23S rRNA + S-adenosyl-L-methionine = N(2)-methylguanosine(2445) in 23S rRNA + S-adenosyl-L-homocysteine + H(+). The enzyme catalyses guanosine(2069) in 23S rRNA + S-adenosyl-L-methionine = N(2)-methylguanosine(2069) in 23S rRNA + S-adenosyl-L-homocysteine + H(+). Specifically methylates the guanine in position 2445 (m2G2445) and the guanine in position 2069 (m7G2069) of 23S rRNA. This Salmonella gallinarum (strain 287/91 / NCTC 13346) protein is Ribosomal RNA large subunit methyltransferase K/L.